The primary structure comprises 470 residues: Acetyl-CoA decarbonylase/synthase complex subunit gamma 2 (470 aa).

The 60-residue stretch at 1 to 60 folds into the 4Fe-4S domain; it reads MKINSPLEAYKYLPQTNCGECGQPTCMAFASTLIDRSGKTTDCPPLIKEKKFAKKLAELD. Cys-18, Cys-21, Cys-26, and Cys-43 together coordinate [4Fe-4S] cluster.

As to quaternary structure, heterodimer of delta and gamma chains. The ACDS complex is made up of alpha, epsilon, beta, gamma and delta chains with a probable stoichiometry of (alpha(2)epsilon(2))(4)-beta(8)-(gamma(1)delta(1))(8). The cofactor is corrinoid. Requires [4Fe-4S] cluster as cofactor.

The catalysed reaction is 5,6,7,8-tetrahydrosarcinapterin + methyl-Co(III)-[corrinoid Fe-S protein] = 5-methyltetrahydrosarcinapterin + Co(I)-[corrinoid Fe-S protein] + H(+). It functions in the pathway one-carbon metabolism; methanogenesis from acetate. Part of a complex that catalyzes the reversible cleavage of acetyl-CoA, allowing growth on acetate as sole source of carbon and energy. The sequence is that of Acetyl-CoA decarbonylase/synthase complex subunit gamma 2 from Methanosarcina mazei (strain ATCC BAA-159 / DSM 3647 / Goe1 / Go1 / JCM 11833 / OCM 88) (Methanosarcina frisia).